The chain runs to 187 residues: Phospholipase A2-gamma (187 aa).

The N-terminal stretch at 1-25 (MITGLALSRVAFGLTAFLLLAVVSS) is a signal peptide. 6 disulfide bridges follow: Cys29–Cys56, Cys33–Cys62, Cys38–Cys115, Cys49–Cys69, Cys68–Cys93, and Cys75–Cys86. Tyr48, Gly50, and Tyr53 together coordinate Ca(2+). His72 is an active-site residue. Position 73 (Asp73) interacts with Ca(2+).

Belongs to the phospholipase A2 family. Ca(2+) is required as a cofactor. Strongly expressed in mature flowers but weakly expressed in other tissues. Detected in buds, open flowers and in pollen.

Its subcellular location is the secreted. The protein localises to the golgi apparatus. The protein resides in the trans-Golgi network. It is found in the endoplasmic reticulum. It catalyses the reaction a 1,2-diacyl-sn-glycero-3-phosphocholine + H2O = a 1-acyl-sn-glycero-3-phosphocholine + a fatty acid + H(+). Functionally, PA2 catalyzes the calcium-dependent hydrolysis of the 2-acyl groups in 3-sn-phosphoglycerides. Releases lysophospholipids (LPLs) and free fatty acids (FFAs) from membrane phospholipids in response to hormones and other external stimuli. Plays a role in pollen development and germination and tube growth. The polypeptide is Phospholipase A2-gamma (PLA2-GAMMA) (Arabidopsis thaliana (Mouse-ear cress)).